Here is a 518-residue protein sequence, read N- to C-terminus: Probable cyclic di-GMP phosphodiesterase PdeN (518 aa).

2 helical membrane-spanning segments follow: residues 16–36 (CIVAGVMIAILVSCLQFLVAW) and 236–256 (VWYAFLLGGMSGTVVGLLCYY). In terms of domain architecture, EAL spans 261–514 (RMRPGREIMT…DFVRWLKKPY (254 aa)).

The protein localises to the cell inner membrane. The enzyme catalyses 3',3'-c-di-GMP + H2O = 5'-phosphoguanylyl(3'-&gt;5')guanosine + H(+). Its function is as follows. Phosphodiesterase (PDE) that catalyzes the hydrolysis of cyclic-di-GMP (c-di-GMP) to 5'-pGpG. The protein is Probable cyclic di-GMP phosphodiesterase PdeN of Escherichia coli (strain K12).